Consider the following 209-residue polypeptide: Dual specificity phosphatase 29 (209 aa).

Positions 45-193 (HVNEVWPNLY…LRELDIKLAL (149 aa)) constitute a Tyrosine-protein phosphatase domain. Substrate is bound at residue 137–144 (NCAMGRSR). C138 functions as the Phosphocysteine intermediate in the catalytic mechanism.

It belongs to the protein-tyrosine phosphatase family. Non-receptor class dual specificity subfamily.

The protein resides in the cytoplasm. The protein localises to the nucleus. It carries out the reaction O-phospho-L-tyrosyl-[protein] + H2O = L-tyrosyl-[protein] + phosphate. The catalysed reaction is O-phospho-L-seryl-[protein] + H2O = L-seryl-[protein] + phosphate. It catalyses the reaction O-phospho-L-threonyl-[protein] + H2O = L-threonyl-[protein] + phosphate. Its function is as follows. Dual specificity phosphatase able to dephosphorylate phosphotyrosine, phosphoserine and phosphothreonine residues, with a preference for phosphotyrosine as a substrate. In terms of biological role, dual specificity phosphatase able to dephosphorylate phosphotyrosine, phosphoserine and phosphothreonine residues within the same substrate, with a preference for phosphotyrosine as a substrate. Involved in the modulation of AMPK and MAPK1/2 signaling pathway. In Xenopus laevis (African clawed frog), this protein is Dual specificity phosphatase 29 (dusp29).